The sequence spans 500 residues: Chromosomal replication initiator protein DnaA (500 aa).

The domain I, interacts with DnaA modulators stretch occupies residues 1 to 81 (MVNASGDPVI…LQALRTVTGE (81 aa)). The segment at 81–155 (ENMFPAFKVV…QQKMNRDPET (75 aa)) is domain II. The domain III, AAA+ region stretch occupies residues 156 to 377 (HLNKNFTFDS…GALTRVTAVA (222 aa)). ATP-binding residues include G200, G202, K203, and T204. Residues 378–500 (SLSNQPVTRA…TVRLKQSNTN (123 aa)) are domain IV, binds dsDNA.

Belongs to the DnaA family. In terms of assembly, oligomerizes as a right-handed, spiral filament on DNA at oriC.

It is found in the cytoplasm. Its function is as follows. Plays an essential role in the initiation and regulation of chromosomal replication. ATP-DnaA binds to the origin of replication (oriC) to initiate formation of the DNA replication initiation complex once per cell cycle. Binds the DnaA box (a 9 base pair repeat at the origin) and separates the double-stranded (ds)DNA. Forms a right-handed helical filament on oriC DNA; dsDNA binds to the exterior of the filament while single-stranded (ss)DNA is stabiized in the filament's interior. The ATP-DnaA-oriC complex binds and stabilizes one strand of the AT-rich DNA unwinding element (DUE), permitting loading of DNA polymerase. After initiation quickly degrades to an ADP-DnaA complex that is not apt for DNA replication. Binds acidic phospholipids. The sequence is that of Chromosomal replication initiator protein DnaA from Bifidobacterium longum (strain DJO10A).